The primary structure comprises 376 residues: MNFYSINLVKAHLINYPCPLNINFLWNYGFLLGIIFFIQIITGVFLASRYTPDVSYAYYSIQHILRELWSGWCFRYMHATGASLVFLLTYLHILRGLNYSYMYLPLSWISGLILFMIFIVTAFVGYVLPWGQMSYWGATVITNLLSSIPVAVIWICGGYTVSDPTIKRFFVLHFILPFIGLCIVFIHIFFLHLHGSTNPLGYDTALKIPFYPNLLSLDVKGFNNVIILFLIQSLFGIIPLSHPDNAIVVNTYVTPSQIVPEWYFLPFYAMLKTVPSKPAGLVIVLLSLQLLFLLAEQRSLTTIIQFKMIFGARDYSVPIIWFMCAFYALLWIGCQLPQDIFILYGRLFIVLFFCSGLFVLVHYRRTHYDYSSQANI.

The next 4 membrane-spanning stretches (helical) occupy residues 28–48 (YGFL…FLAS), 72–94 (WCFR…LHIL), 107–127 (SWIS…VGYV), and 169–189 (FFVL…IHIF). Heme b is bound by residues His-78 and His-92. His-173 and His-187 together coordinate heme b. His-192 provides a ligand contact to a ubiquinone. 4 helical membrane passes run 214-234 (LLSL…IQSL), 274-294 (VPSK…LFLL), 317-337 (VPII…CQLP), and 340-360 (IFIL…LFVL).

The protein belongs to the cytochrome b family. The main subunits of complex b-c1 are: cytochrome b, cytochrome c1 and the Rieske protein. Heme b is required as a cofactor.

Its subcellular location is the mitochondrion inner membrane. Component of the ubiquinol-cytochrome c reductase complex (complex III or cytochrome b-c1 complex) that is part of the mitochondrial respiratory chain. The b-c1 complex mediates electron transfer from ubiquinol to cytochrome c. Contributes to the generation of a proton gradient across the mitochondrial membrane that is then used for ATP synthesis. This is Cytochrome b (MT-CYB) from Plasmodium falciparum.